Consider the following 426-residue polypeptide: MALIDAIHAREILDSRGNPTVEVEVLLSDGQIGRAAVPSGASTGEHEAVELRDGDKGRYLGKGVQKAVDAVIDEISPALIGFDATDQRSIDQAMIDLDGTPNKGKLGANAILGVSLAVANAAAASADLPLYKYLGGPNAHVLPVPLMNILNGGSHADSDVDIQEFMIAPIGAETFSEGLRWGVEVYHNLKAVLQEKGLSTGLGDEGGFAPNLPSNRAALDLIQEAIKNAGYTPGTDIALALDVASSEFYKEGAYQFEGKALSATEMSAYYAELVADYPLVSIEDPLDENDWEGWKTLTDTIGDKVQLVGDDLFVTNPVRLQQGIETATANSLLVKVNQIGSLTETLDAVSLAQRSGYTTITSHRSGETEDTTIADIAVATNAGQIKTGAPARSERVAKYNQLLRIEEELDDAARYAGRSAFPRFKG.

Q163 is a binding site for (2R)-2-phosphoglycerate. E205 functions as the Proton donor in the catalytic mechanism. Mg(2+)-binding residues include D242, E283, and D310. 4 residues coordinate (2R)-2-phosphoglycerate: K335, R364, S365, and K386. The Proton acceptor role is filled by K335.

The protein belongs to the enolase family. Mg(2+) serves as cofactor.

It is found in the cytoplasm. Its subcellular location is the secreted. It localises to the cell surface. It carries out the reaction (2R)-2-phosphoglycerate = phosphoenolpyruvate + H2O. It functions in the pathway carbohydrate degradation; glycolysis; pyruvate from D-glyceraldehyde 3-phosphate: step 4/5. Its function is as follows. Catalyzes the reversible conversion of 2-phosphoglycerate (2-PG) into phosphoenolpyruvate (PEP). It is essential for the degradation of carbohydrates via glycolysis. The polypeptide is Enolase (Paenarthrobacter aurescens (strain TC1)).